A 270-amino-acid chain; its full sequence is MVRQRKKRGRPVSGWVIFDKPKGMRSTEAVSQIKWLFHAQKAGHAGTLDPLASGLLPIALGEATKTVPYVMQGTKTYRFQIAWGEERSTDDLEGEITHISSKRPTQEEILALLPQYTGVILQTPPQFSAIKITGNRAYDLAREGKVVEIPPRQVEIETFKLIETPTRERSVFEITCGKGTYVRSLARDMGRDLGCYGHIADLRRTTVAPFCEDDLITWEELKAVALDKIAINENGIPSERNFTKIDELLIETGAALKCLSHYTLSETRAQ.

The active-site Nucleophile is aspartate 49.

Belongs to the pseudouridine synthase TruB family. Type 1 subfamily.

The enzyme catalyses uridine(55) in tRNA = pseudouridine(55) in tRNA. Its function is as follows. Responsible for synthesis of pseudouridine from uracil-55 in the psi GC loop of transfer RNAs. The protein is tRNA pseudouridine synthase B of Bartonella quintana (strain Toulouse) (Rochalimaea quintana).